The sequence spans 306 residues: tRNA pseudouridine synthase B (306 aa).

Residue D38 is the Nucleophile of the active site.

It belongs to the pseudouridine synthase TruB family. Type 1 subfamily.

The catalysed reaction is uridine(55) in tRNA = pseudouridine(55) in tRNA. Functionally, responsible for synthesis of pseudouridine from uracil-55 in the psi GC loop of transfer RNAs. The sequence is that of tRNA pseudouridine synthase B from Syntrophotalea carbinolica (strain DSM 2380 / NBRC 103641 / GraBd1) (Pelobacter carbinolicus).